Here is a 623-residue protein sequence, read N- to C-terminus: tRNA uridine 5-carboxymethylaminomethyl modification enzyme MnmG (623 aa).

12-17 contributes to the FAD binding site; the sequence is GAGHAG. 272-286 lines the NAD(+) pocket; sequence GPRYCPSIEDKINRF.

This sequence belongs to the MnmG family. In terms of assembly, homodimer. Heterotetramer of two MnmE and two MnmG subunits. The cofactor is FAD.

The protein resides in the cytoplasm. NAD-binding protein involved in the addition of a carboxymethylaminomethyl (cmnm) group at the wobble position (U34) of certain tRNAs, forming tRNA-cmnm(5)s(2)U34. This Christiangramia forsetii (strain DSM 17595 / CGMCC 1.15422 / KT0803) (Gramella forsetii) protein is tRNA uridine 5-carboxymethylaminomethyl modification enzyme MnmG.